A 241-amino-acid polypeptide reads, in one-letter code: Transcription factor HEC1 (241 aa).

Residues 128–177 (ISKDPQSVAARHRRERISERIRILQRLVPGGTKMDTASMLDEAIHYVKFL) form the bHLH domain.

Homodimer. Interacts with SPT. Interacts with BZIP30. In terms of tissue distribution, flowers, especially in gynoecium.

The protein localises to the nucleus. Its function is as follows. Required for the female reproductive tract development and fertility. The sequence is that of Transcription factor HEC1 (HEC1) from Arabidopsis thaliana (Mouse-ear cress).